The primary structure comprises 72 residues: Large ribosomal subunit protein bL31 (72 aa).

Zn(2+) contacts are provided by cysteine 16, cysteine 18, cysteine 37, and cysteine 40.

The protein belongs to the bacterial ribosomal protein bL31 family. Type A subfamily. In terms of assembly, part of the 50S ribosomal subunit. Zn(2+) is required as a cofactor.

Functionally, binds the 23S rRNA. This Pseudomonas fluorescens (strain Pf0-1) protein is Large ribosomal subunit protein bL31.